The sequence spans 358 residues: Mannonate dehydratase (358 aa).

Belongs to the mannonate dehydratase family. Requires Fe(2+) as cofactor. The cofactor is Mn(2+).

It carries out the reaction D-mannonate = 2-dehydro-3-deoxy-D-gluconate + H2O. Its pathway is carbohydrate metabolism; pentose and glucuronate interconversion. Its function is as follows. Catalyzes the dehydration of D-mannonate. The sequence is that of Mannonate dehydratase from Lactococcus lactis subsp. lactis (strain IL1403) (Streptococcus lactis).